A 470-amino-acid polypeptide reads, in one-letter code: Serine carboxypeptidase ctsa-4.1 (470 aa).

The N-terminal stretch at 1–19 (MKLLSILFIFVSSYSFCLA) is a signal peptide. An N-linked (GlcNAc...) asparagine glycan is attached at Asn132. Ser169 is a catalytic residue. Asn316 carries an N-linked (GlcNAc...) asparagine glycan. The active site involves Asp380. N-linked (GlcNAc...) asparagine glycosylation occurs at Asn396. Residue His441 is part of the active site.

The protein belongs to the peptidase S10 family.

The catalysed reaction is Release of a C-terminal amino acid with broad specificity.. This Caenorhabditis elegans protein is Serine carboxypeptidase ctsa-4.1.